A 273-amino-acid polypeptide reads, in one-letter code: MKDLSIRIAVVGAGGRMGRQLIQAIEQMDGVVLGAALERSGSSLLGSDAGELAGLGKNGITVNESLDAVQNDFDILIDFTRPEGTLAHLAFCRLHRKGMIIGTTGFDDAGKAAIKQAAQDIGIVFAANFSVGVNVMLKLLEKAAKVMGDYTDIEIIEAHHRHKVDAPSGTALAMGEVIADALGRDLKSCAVYTREGHTGERDPKSIGFATVRAGDIVGEHTAMFADIGERVEITHKASSRMTFANGAVRAAIWISSKESGIFDMRDVLSLDDL.

Residues 12 to 17 (GAGGRM) and Glu38 contribute to the NAD(+) site. Residue Arg39 participates in NADP(+) binding. Residues 102 to 104 (GTT) and 126 to 129 (AANF) contribute to the NAD(+) site. His159 functions as the Proton donor/acceptor in the catalytic mechanism. His160 contributes to the (S)-2,3,4,5-tetrahydrodipicolinate binding site. The active-site Proton donor is the Lys163. 169–170 (GT) contacts (S)-2,3,4,5-tetrahydrodipicolinate.

The protein belongs to the DapB family. In terms of assembly, homotetramer.

Its subcellular location is the cytoplasm. It carries out the reaction (S)-2,3,4,5-tetrahydrodipicolinate + NAD(+) + H2O = (2S,4S)-4-hydroxy-2,3,4,5-tetrahydrodipicolinate + NADH + H(+). The catalysed reaction is (S)-2,3,4,5-tetrahydrodipicolinate + NADP(+) + H2O = (2S,4S)-4-hydroxy-2,3,4,5-tetrahydrodipicolinate + NADPH + H(+). The protein operates within amino-acid biosynthesis; L-lysine biosynthesis via DAP pathway; (S)-tetrahydrodipicolinate from L-aspartate: step 4/4. Functionally, catalyzes the conversion of 4-hydroxy-tetrahydrodipicolinate (HTPA) to tetrahydrodipicolinate. This chain is 4-hydroxy-tetrahydrodipicolinate reductase, found in Pectobacterium atrosepticum (strain SCRI 1043 / ATCC BAA-672) (Erwinia carotovora subsp. atroseptica).